The sequence spans 123 residues: MPTINQLIAQPRKIQRSRNKVPALDACPQKRGVCTRVYTTTPKKPNSALRKVAKVRLTNGFEVIGYIPGEGHNLQEHSVVMIRGGRVKDLPGVRYHILRGVLDTQGVKNRKQRRSKYGAKRPK.

Aspartate 89 is subject to 3-methylthioaspartic acid.

This sequence belongs to the universal ribosomal protein uS12 family. In terms of assembly, part of the 30S ribosomal subunit. Contacts proteins S8 and S17. May interact with IF1 in the 30S initiation complex.

With S4 and S5 plays an important role in translational accuracy. In terms of biological role, interacts with and stabilizes bases of the 16S rRNA that are involved in tRNA selection in the A site and with the mRNA backbone. Located at the interface of the 30S and 50S subunits, it traverses the body of the 30S subunit contacting proteins on the other side and probably holding the rRNA structure together. The combined cluster of proteins S8, S12 and S17 appears to hold together the shoulder and platform of the 30S subunit. The polypeptide is Small ribosomal subunit protein uS12 (Methylobacterium radiotolerans (strain ATCC 27329 / DSM 1819 / JCM 2831 / NBRC 15690 / NCIMB 10815 / 0-1)).